We begin with the raw amino-acid sequence, 338 residues long: RNA 3'-terminal phosphate cyclase (338 aa).

ATP contacts are provided by residues Gln-103 and 283–287 (YLADQ). The Tele-AMP-histidine intermediate role is filled by His-308.

The protein belongs to the RNA 3'-terminal cyclase family. Type 1 subfamily.

It is found in the cytoplasm. It carries out the reaction a 3'-end 3'-phospho-ribonucleotide-RNA + ATP = a 3'-end 2',3'-cyclophospho-ribonucleotide-RNA + AMP + diphosphate. In terms of biological role, catalyzes the conversion of 3'-phosphate to a 2',3'-cyclic phosphodiester at the end of RNA. The mechanism of action of the enzyme occurs in 3 steps: (A) adenylation of the enzyme by ATP; (B) transfer of adenylate to an RNA-N3'P to produce RNA-N3'PP5'A; (C) and attack of the adjacent 2'-hydroxyl on the 3'-phosphorus in the diester linkage to produce the cyclic end product. The biological role of this enzyme is unknown but it is likely to function in some aspects of cellular RNA processing. This chain is RNA 3'-terminal phosphate cyclase, found in Escherichia coli O17:K52:H18 (strain UMN026 / ExPEC).